The primary structure comprises 82 residues: Large ribosomal subunit protein bL27 (82 aa).

Residues 1 to 21 form a disordered region; sequence MAHKKGASSSRNGRDSNAKRL.

It belongs to the bacterial ribosomal protein bL27 family.

The chain is Large ribosomal subunit protein bL27 from Tropheryma whipplei (strain Twist) (Whipple's bacillus).